An 87-amino-acid chain; its full sequence is Small ribosomal subunit protein bS20 (87 aa).

It belongs to the bacterial ribosomal protein bS20 family.

In terms of biological role, binds directly to 16S ribosomal RNA. In Finegoldia magna (strain ATCC 29328 / DSM 20472 / WAL 2508) (Peptostreptococcus magnus), this protein is Small ribosomal subunit protein bS20.